We begin with the raw amino-acid sequence, 502 residues long: MFS-type transporeter aprT (502 aa).

The disordered stretch occupies residues 1 to 38 (MASPELASHHSDPSDGEGAPFLPGVDDESPESLNSDIP). Transmembrane regions (helical) follow at residues 45-65 (HGLI…GPMI), 114-136 (IGYR…GLLA), 150-170 (VGFV…NIFP), 175-195 (WFGA…ALFW), 214-234 (FGIA…FVMK), 239-259 (VPLM…NLLP), 302-322 (VAVI…AFLV), 336-356 (ATLL…FILP), 380-400 (VMLL…NTLI), 403-423 (LLLH…ITGL), and 464-484 (LWIG…ALVL). N495 carries N-linked (GlcNAc...) asparagine glycosylation.

Belongs to the major facilitator superfamily.

The protein localises to the cell membrane. Functionally, MFS-rype transporer; part of the gene cluster that mediates the biosynthesis of the asperipin-2a, a bicyclic peptide that possesses two macrocyclic ether rings consisting of 14- and 17-membered paracyclophans. AprT is likely to be involved in the cellular export of asperipin-2a. This chain is MFS-type transporeter aprT, found in Aspergillus flavus (strain ATCC 200026 / FGSC A1120 / IAM 13836 / NRRL 3357 / JCM 12722 / SRRC 167).